A 281-amino-acid chain; its full sequence is 2,3,4,5-tetrahydropyridine-2,6-dicarboxylate N-succinyltransferase (281 aa).

Residues Arg-108 and Asp-145 each coordinate substrate.

It belongs to the transferase hexapeptide repeat family. Homotrimer.

It localises to the cytoplasm. The catalysed reaction is (S)-2,3,4,5-tetrahydrodipicolinate + succinyl-CoA + H2O = (S)-2-succinylamino-6-oxoheptanedioate + CoA. It participates in amino-acid biosynthesis; L-lysine biosynthesis via DAP pathway; LL-2,6-diaminopimelate from (S)-tetrahydrodipicolinate (succinylase route): step 1/3. This Nitrobacter hamburgensis (strain DSM 10229 / NCIMB 13809 / X14) protein is 2,3,4,5-tetrahydropyridine-2,6-dicarboxylate N-succinyltransferase.